A 1446-amino-acid polypeptide reads, in one-letter code: Centrosomal protein of 164 kDa (1446 aa).

Residues 1 to 195 (MARRPILLGD…PPQGLKAAAC (195 aa)) form an interaction with ATRIP region. The 34-residue stretch at 56-89 (APLPKGWKPCQNITGDLYYFNFDTGQSIWDHPCD) folds into the WW domain. 2 disordered regions span residues 106–132 (PGAIKKKDKKKKKEKKNKKDKETSKSP) and 159–185 (PPSALRGSQSVSLGSSADSGHLGEPTL). Over residues 109-121 (IKKKDKKKKKEKK) the composition is skewed to basic residues. A compositionally biased stretch (polar residues) spans 164 to 176 (RGSQSVSLGSSAD). S202 bears the Phosphoserine mark. Disordered stretches follow at residues 217 to 238 (EETNEEDEEESDNQSVRSSSEL), 250 to 408 (GGNF…SFLG), 424 to 570 (GDTL…EPAA), and 830 to 849 (KRQEVEREHERKMDKMKEEH). The span at 218–228 (ETNEEDEEESD) shows a compositional bias: acidic residues. The span at 257 to 277 (ESPRTSQPDKKDVSLDSDADR) shows a compositional bias: basic and acidic residues. A compositionally biased stretch (polar residues) spans 288-312 (GADSSVASANGSKSQGRGASPWNPQ). 2 stretches are compositionally biased toward basic and acidic residues: residues 355 to 372 (KEGECRRESAAKEPKEAS) and 384 to 397 (SEIHGHLKDARHSG). Polar residues predominate over residues 451–461 (SSIAEPQSKHT). Basic and acidic residues-rich tracts occupy residues 490–499 (PEWKEAEGPG) and 525–534 (ERAEEKHSQA). Positions 1143 to 1197 (EVLGNMRKNLNEETRHLDEMKSAMRKGHDLLKKKEEKLIQLESSLQEEVSDEDTL) form a coiled coil. Residues 1261–1287 (LGSLNSQPPPQGLGSQPPPPLFTSSLR) form a disordered region. A compositionally biased stretch (pro residues) spans 1267-1281 (QPPPQGLGSQPPPPL). Phosphoserine occurs at positions 1369 and 1371.

As to quaternary structure, interacts (via N-terminus) with ATRIP. Interacts with ATM, ATR and MDC1. Interacts with XPA (via N-terminus) upon UV irradiation. Interacts with CEP83, CCDC92, TTBK2, DVL3, NPHP3 and weakly with NPHP4. Interacts with DZIP1.

Its subcellular location is the cytoplasm. It is found in the cytoskeleton. The protein localises to the microtubule organizing center. It localises to the centrosome. The protein resides in the centriole. Its subcellular location is the nucleus. Plays a role in microtubule organization and/or maintenance for the formation of primary cilia (PC), a microtubule-based structure that protrudes from the surface of epithelial cells. Plays a critical role in G2/M checkpoint and nuclear divisions. A key player in the DNA damage-activated ATR/ATM signaling cascade since it is required for the proper phosphorylation of H2AX, RPA, CHEK2 and CHEK1. Plays a critical role in chromosome segregation, acting as a mediator required for the maintenance of genomic stability through modulation of MDC1, RPA and CHEK1. This chain is Centrosomal protein of 164 kDa, found in Mus musculus (Mouse).